A 447-amino-acid chain; its full sequence is Argininosuccinate synthase (447 aa).

ATP-binding positions include 17-25 (AFSGGLDTS) and A43. Y99 contributes to the L-citrulline binding site. ATP-binding residues include G129 and T131. Residues T131, N135, and D136 each contribute to the L-aspartate site. N135 is an L-citrulline binding site. Residue D136 coordinates ATP. The L-citrulline site is built by R139 and S192. D194 is an ATP binding site. The L-citrulline site is built by T201, E203, and E280.

The protein belongs to the argininosuccinate synthase family. Type 2 subfamily. As to quaternary structure, homotetramer.

The protein localises to the cytoplasm. It carries out the reaction L-citrulline + L-aspartate + ATP = 2-(N(omega)-L-arginino)succinate + AMP + diphosphate + H(+). The protein operates within amino-acid biosynthesis; L-arginine biosynthesis; L-arginine from L-ornithine and carbamoyl phosphate: step 2/3. This Paracidovorax citrulli (strain AAC00-1) (Acidovorax citrulli) protein is Argininosuccinate synthase.